The primary structure comprises 347 residues: Probable RNA methyltransferase Lcho_2507 (347 aa).

Glu-89 functions as the Proton acceptor in the catalytic mechanism. In terms of domain architecture, Radical SAM core spans 92-318 (LLPRDGLCVS…TKLRQSAGQD (227 aa)). A disulfide bridge connects residues Cys-99 and Cys-323. [4Fe-4S] cluster contacts are provided by Cys-106, Cys-110, and Cys-113. Residues 151–152 (GE), Ser-181, 204–206 (SLH), and Asn-280 contribute to the S-adenosyl-L-methionine site. Cys-323 (S-methylcysteine intermediate) is an active-site residue.

The protein belongs to the radical SAM superfamily. RlmN family. Requires [4Fe-4S] cluster as cofactor.

It localises to the cytoplasm. This chain is Probable RNA methyltransferase Lcho_2507, found in Leptothrix cholodnii (strain ATCC 51168 / LMG 8142 / SP-6) (Leptothrix discophora (strain SP-6)).